Here is a 1359-residue protein sequence, read N- to C-terminus: ABC transporter C family member 1 (1359 aa).

The region spanning 111-394 is the ABC transmembrane type-1 1 domain; the sequence is NKLTIFLQIL…LPNSIQQLQS (284 aa). 6 consecutive transmembrane segments (helical) span residues 119-139, 147-167, 214-234, 244-264, 332-352, and 363-383; these read ILTNILSILSPLSLKYFIQFI, SFLAGIGYCILLLIASFSYTF, LLSVDVGIISNFFWIEHMGIF, LALLCWVIGWSGLVGFAIMVI, MIFWIFAEMMKQAVNAIVLVL, and ITLEVAFTTISIFVSLRIPLL. The interval 409–478 is disordered; that stretch reads PEIQQNHSSN…QQQQQQQQQQ (70 aa). Positions 420–433 are enriched in acidic residues; sequence EEEEEDEYDDDINS. The span at 440-450 shows a compositional bias: polar residues; that stretch reads HNGSFNWNQVD. Residues 459 to 478 show a composition bias toward low complexity; that stretch reads GNQQQQQQQQQQQQQQQQQQ. One can recognise an ABC transporter 1 domain in the interval 470 to 690; sequence QQQQQQQQQQ…IDFESIMKTK (221 aa). Residue 502-509 participates in ATP binding; it reads GVVGSGKT. The ABC transmembrane type-1 2 domain maps to 763–1061; it reads LRVYKEYFKH…LEVKMNSVER (299 aa). 5 helical membrane passes run 773–793, 819–839, 884–904, 906–926, and 999–1021; these read GSSIPLFIMTCIVYMISQIIY, IYLLFIVGFIIFLVIRYFMMA, VDLLLFDLFSDVLYCGSTVLV, IGIMIYISPLIIIPFLLLIGI, and WVAVRLEFISSIVVFLAAFFSLF. Residues 1073 to 1102 adopt a coiled-coil conformation; sequence NSKINFFRNEQQEEEEEEEEEFDFDNDDYD. Positions 1116-1350 constitute an ABC transporter 2 domain; it reads IEFRNVEIKY…QESRFSKLVK (235 aa). 1150 to 1157 is an ATP binding site; the sequence is GRTGAGKS.

The protein belongs to the ABC transporter superfamily. ABCC family. Conjugate transporter (TC 3.A.1.208) subfamily.

It localises to the membrane. This Dictyostelium discoideum (Social amoeba) protein is ABC transporter C family member 1 (abcC1).